The following is a 126-amino-acid chain: Nucleoside diphosphate kinase B (126 aa).

ATP is bound by residues K6, F37, T68, R79, and N89. The Pros-phosphohistidine intermediate role is filled by H92.

It belongs to the NDK family. Mg(2+) is required as a cofactor.

It localises to the cytoplasm. Its subcellular location is the nucleus. The protein localises to the cell projection. The protein resides in the lamellipodium. It is found in the ruffle. The enzyme catalyses a 2'-deoxyribonucleoside 5'-diphosphate + ATP = a 2'-deoxyribonucleoside 5'-triphosphate + ADP. It catalyses the reaction a ribonucleoside 5'-diphosphate + ATP = a ribonucleoside 5'-triphosphate + ADP. In terms of biological role, major role in the synthesis of nucleoside triphosphates other than ATP. This chain is Nucleoside diphosphate kinase B (nme2), found in Merluccius capensis (Shallow-water Cape hake).